The chain runs to 212 residues: Cytidylate kinase (212 aa).

7-15 lines the ATP pocket; that stretch reads GPAASGKGT.

The protein belongs to the cytidylate kinase family. Type 1 subfamily.

The protein resides in the cytoplasm. It carries out the reaction CMP + ATP = CDP + ADP. The enzyme catalyses dCMP + ATP = dCDP + ADP. In Rhodopseudomonas palustris (strain BisB5), this protein is Cytidylate kinase.